Reading from the N-terminus, the 1243-residue chain is Serine/threonine-protein kinase WNK4 (1243 aa).

Over residues 1 to 17 the composition is skewed to polar residues; that stretch reads MLASPATETTVLMSQTE. The interval 1–142 is disordered; it reads MLASPATETT…GPGSREPLRV (142 aa). The segment covering 65–77 has biased composition (low complexity); the sequence is VDLGLLSSWSLPA. Over residues 78–103 the composition is skewed to pro residues; sequence SPAPDPPDPPDSAGPGPARSPPPSSK. At S97 the chain carries Phosphoserine. Residues 118 to 127 show a composition bias toward basic and acidic residues; that stretch reads AAEDSARPEL. Glycyl lysine isopeptide (Lys-Gly) (interchain with G-Cter in ubiquitin) cross-links involve residues K157 and K175. In terms of domain architecture, Protein kinase spans 174-432; sequence LKFDIEIGRG…IQDLLAHAFF (259 aa). S184 is a binding site for ATP. Glycyl lysine isopeptide (Lys-Gly) (interchain with G-Cter in ubiquitin) cross-links involve residues K186, K226, and K241. ATP contacts are provided by residues 254-257 and K304; that span reads TELM. The active-site Proton acceptor is D321. K328 is covalently cross-linked (Glycyl lysine isopeptide (Lys-Gly) (interchain with G-Cter in ubiquitin)). A phosphoserine; by autocatalysis mark is found at S331 and S335. Residues K387, K393, K450, and K454 each participate in a glycyl lysine isopeptide (Lys-Gly) (interchain with G-Cter in ubiquitin) cross-link. The disordered stretch occupies residues 526-564; sequence KARELEALPPEPGPPPATVPMAPGPPSVFPPEPEEPEAD. A compositionally biased stretch (pro residues) spans 534–556; it reads PPEPGPPPATVPMAPGPPSVFPP. Positions 557–567 are interaction with KLHL3; the sequence is EPEEPEADQHQ. S575 bears the Phosphoserine mark. Positions 630–641 are enriched in low complexity; it reads SGPGSDFSPGDS. Disordered stretches follow at residues 630–683, 751–871, and 943–1110; these read SGPG…SVSD, DTGP…STPE, and SPSP…SPVW. Residues 663-676 show a composition bias toward basic residues; that stretch reads PPGRNLRRRPRSRL. A compositionally biased stretch (pro residues) spans 767–780; that stretch reads EPAPLPALPVPLPD. Positions 797–812 are enriched in low complexity; sequence WTAFSTSSSSPGTPLS. Positions 822-843 are enriched in pro residues; sequence PISPGPIFPITSPPCHPSPSPF. Composition is skewed to low complexity over residues 844 to 854, 862 to 871, and 943 to 952; these read SPISSQVSSNP, PLPFSSSTPE, and SPSPGLLSQS. A compositionally biased stretch (pro residues) spans 953–970; it reads PPAPPSPLPSLPLPPPVA. K1010 participates in a covalent cross-link: Glycyl lysine isopeptide (Lys-Gly) (interchain with G-Cter in ubiquitin). An RFXV motif motif is present at residues 1016-1019; sequence RFQV. Phosphoserine is present on S1035. A compositionally biased stretch (basic and acidic residues) spans 1065–1077; sequence ETREALAESDRAA. Residues K1144, K1157, and K1158 each participate in a glycyl lysine isopeptide (Lys-Gly) (interchain with G-Cter in ubiquitin) cross-link. The segment at 1166–1243 is disordered; the sequence is RLGKQPPPGI…VTFAGDVGRM (78 aa). Composition is skewed to polar residues over residues 1193 to 1204 and 1216 to 1228; these read SFPTSRRNSLQR and NSLS…SQEQ. Position 1217 is a phosphoserine (S1217).

It belongs to the protein kinase superfamily. Ser/Thr protein kinase family. WNK subfamily. As to quaternary structure, interacts with the C-terminal region of KCNJ1. Mg(2+) is required as a cofactor. In terms of processing, autophosphorylated at Ser-331 and Ser-335, promoting its activation. Phosphorylated by WNK1 and WNK3. Phosphorylated at Ser-575 in a MAP3K15/ASK3-dependent process in response to osmotic stress or hypotonic low-chloride stimulation. Post-translationally, ubiquitinated by the BCR(KLHL3) complex, leading to its degradation. Also ubiquitinated by the BCR(KLHL2) complex. Expressed in kidney, colon and skin.

Its subcellular location is the cell junction. The protein localises to the tight junction. The enzyme catalyses L-seryl-[protein] + ATP = O-phospho-L-seryl-[protein] + ADP + H(+). The catalysed reaction is L-threonyl-[protein] + ATP = O-phospho-L-threonyl-[protein] + ADP + H(+). Its activity is regulated as follows. Activation requires autophosphorylation of Ser-331 and Ser-335. Autophosphorylation and subsequent activation is inhibited by increases in intracellular ionic strength: Cl(-) potently inhibits WNK4 kinase activity via direct binding. Also inhibited by K(+) ions. Serine/threonine-protein kinase component of the WNK4-SPAK/OSR1 kinase cascade, which acts as a key regulator of ion transport in the distal nephron and blood pressure. The WNK4-SPAK/OSR1 kinase cascade is composed of WNK4, which mediates phosphorylation and activation of downstream kinases OXSR1/OSR1 and STK39/SPAK. Following activation, OXSR1/OSR1 and STK39/SPAK catalyze phosphorylation of ion cotransporters, such as SLC12A1/NKCC2, SLC12A2/NKCC1, SLC12A3/NCC, SLC12A5/KCC2 or SLC12A6/KCC3, regulating their activity. Acts as a molecular switch that regulates the balance between renal salt reabsorption and K(+) secretion by modulating the activities of renal transporters and channels, including the Na-Cl cotransporter SLC12A3/NCC and the K(+) channel, KCNJ1/ROMK. Regulates NaCl reabsorption in the distal nephron by activating the thiazide-sensitive Na-Cl cotransporter SLC12A3/NCC in distal convoluted tubule cells of kidney: activates SLC12A3/NCC in a OXSR1/OSR1- and STK39/SPAK-dependent process. Also acts as a scaffold protein independently of its protein kinase activity: negatively regulates cell membrane localization of various transporters and channels (CFTR, KCNJ1/ROMK, SLC4A4, SLC26A9 and TRPV4) by clathrin-dependent endocytosis. Also inhibits the activity of the epithelial Na(+) channel (ENaC) SCNN1A, SCNN1B, SCNN1D in a inase-independent mechanism. May also phosphorylate NEDD4L. In Homo sapiens (Human), this protein is Serine/threonine-protein kinase WNK4.